A 243-amino-acid chain; its full sequence is Adenylate kinase 4 (243 aa).

40-45 (GSGKGT) lines the ATP pocket. The tract at residues 60–89 (ATGDMLRAAVAAKTPLGVKAKEAMDKGELV) is NMP. AMP is bound by residues threonine 61, arginine 66, 87-89 (ELV), 115-118 (GFPR), and glutamine 122. An LID region spans residues 156–193 (GRWIHPSSGRSYHTKFAPPKVPGVDDVTGEPLIQRKDD). Arginine 157 contributes to the ATP binding site. AMP-binding residues include arginine 190 and arginine 201.

The protein belongs to the adenylate kinase family.

The protein resides in the cytoplasm. It catalyses the reaction AMP + ATP = 2 ADP. Its function is as follows. Catalyzes the reversible transfer of the terminal phosphate group between ATP and AMP. Plays an important role in cellular energy homeostasis and in adenine nucleotide metabolism. This Oryza sativa subsp. japonica (Rice) protein is Adenylate kinase 4 (ADK-B).